Reading from the N-terminus, the 404-residue chain is BRCA1-A complex subunit Abraxas 1 (404 aa).

The 155-residue stretch at 7–161 (YIRVSGFVLG…YAVYRSHGSQ (155 aa)) folds into the MPN domain. Positions 219–268 (MNNSLQGELKMACKKVEESERLVEKLLADVSDLRRMVNERKQELREISAD) form a coiled coil. The tract at residues 339–404 (GRLGRGGGTS…NLDVSNSPVF (66 aa)) is disordered. Residues 391-404 (RNGNNLDVSNSPVF) are compositionally biased toward polar residues. Serine 401 carries the phosphoserine modification. A pSXXF motif motif is present at residues 401–404 (SPVF).

Belongs to the FAM175 family. Abraxas subfamily. As to quaternary structure, component of the BRCA1-A complex. Component of the BRISC complex. Homodimer. Interacts directly (when phosphorylated at Ser-401) with brca1. The phosphorylated homodimer can interact directly with two brca1 chains, giving rise to a heterotetramer. In terms of processing, phosphorylation of Ser-401 of the pSXXF motif by ATM or ATR constitutes a specific recognition motif for the BRCT domain of BRCA1.

It is found in the nucleus. In terms of biological role, involved in DNA damage response and double-strand break (DSB) repair. Component of the BRCA1-A complex, acting as a central scaffold protein that assembles the various components of the complex and mediates the recruitment of brca1. The BRCA1-A complex specifically recognizes 'Lys-63'-linked ubiquitinated histones H2A and H2AX at DNA lesion sites, leading to target the brca1-bard1 heterodimer to sites of DNA damage at DSBs. This complex also possesses deubiquitinase activity that specifically removes 'Lys-63'-linked ubiquitin on histones H2A and H2AX. The protein is BRCA1-A complex subunit Abraxas 1 of Salmo salar (Atlantic salmon).